We begin with the raw amino-acid sequence, 591 residues long: Speriolin (591 aa).

Residues 1–42 adopt a coiled-coil conformation; the sequence is MSLLTNYEGLRHQIERLVRENEELKKLVRLIRENHELKSAIK. Residues 1 to 78 form a necessary for targeting centrosomes region; sequence MSLLTNYEGL…NNGVFLPPSP (78 aa). The segment covering 302–314 has biased composition (polar residues); it reads NTSDTQAQPSAAQ. Disordered stretches follow at residues 302-331 and 346-435; these read NTSD…TSPT and ATSY…ENPR. Over residues 317 to 331 the composition is skewed to low complexity; that stretch reads VVPASVPTSPTTSPT. Composition is skewed to polar residues over residues 346–357 and 390–401; these read ATSYTPSSTTHI and PRTSSSPASVND.

Belongs to the speriolin family. In terms of assembly, found in a complex with CDC20, CDC27 and TUBG1. Interacts with CDC20. As to expression, detected only in testis.

The protein resides in the cytoplasm. It is found in the cytoskeleton. The protein localises to the microtubule organizing center. It localises to the centrosome. The chain is Speriolin (SPATC1) from Homo sapiens (Human).